We begin with the raw amino-acid sequence, 496 residues long: Transmembrane protein 104 (496 aa).

Residues 1 to 10 (MAGEITETGE) lie on the Cytoplasmic side of the membrane. Residues 11 to 31 (LYSPYVGLVYMFNLIVGTGAL) traverse the membrane as a helical segment. At 32–36 (TMPKA) the chain is on the extracellular side. Residues 37–57 (FATAGWLVSLVLLVFVGFMSF) form a helical membrane-spanning segment. Residues 58–146 (VTTTFAMEAM…SMFFNKVGVN (89 aa)) lie on the Cytoplasmic side of the membrane. The segment at 81 to 100 (THKEEDDEDSSTASDSDLLS) is disordered. Positions 91–100 (STASDSDLLS) are enriched in low complexity. Residues 147 to 167 (LFYFCIITYLYGDLAIYAAAV) form a helical membrane-spanning segment. Over 168–204 (PVSLMQVTCSVSGNDSCGVDTDARYNDTDLCWGPLRR) the chain is Extracellular. N193 is a glycosylation site (N-linked (GlcNAc...) asparagine). Residues 205 to 225 (VDVYRIYLAIFTVLLGPFTFF) traverse the membrane as a helical segment. Over 226–233 (DVQKTKYL) the chain is Cytoplasmic. Residues 234-254 (QILTSMMRWIAFAIMIVLALV) traverse the membrane as a helical segment. Residues 255 to 265 (RIGKGQGEGHP) lie on the Extracellular side of the membrane. Residues 266-286 (PLANFLGVQNLFGVCVYSFMC) form a helical membrane-spanning segment. The Cytoplasmic portion of the chain corresponds to 287 to 306 (QHSLPSLITPISSKRHITRL). Residues 307-327 (LFLDYALILAFYGLLSFTAIF) form a helical membrane-spanning segment. Topologically, residues 328–354 (CFRGDSLMDMYTLNFARCDVVGLAAVR) are extracellular. Residues 355 to 375 (FFLGLFPVFTISTNFPIIAVT) traverse the membrane as a helical segment. Topologically, residues 376 to 397 (LRNNWKTLFHREGGTYPWVVDR) are cytoplasmic. A helical transmembrane segment spans residues 398 to 418 (VVFPTITLVPPILVAFCTHDL). At 419-421 (ESL) the chain is on the extracellular side. The chain crosses the membrane as a helical span at residues 422–442 (VAITGAYAGTGIQYVIPAFLV). The Cytoplasmic segment spans residues 443–470 (YLCRKDTQLTFGYGTVNKHRSPFRHTFW). The helical transmembrane segment at 471 to 491 (VAFVLLWAFSCFFFVTAYIVL) threads the bilayer. The Extracellular segment spans residues 492–496 (KETQL).

Belongs to the TMEM104 family.

Its subcellular location is the membrane. This Mus musculus (Mouse) protein is Transmembrane protein 104 (Tmem104).